Here is a 560-residue protein sequence, read N- to C-terminus: OTU domain-containing protein 5-A (560 aa).

Disordered regions lie at residues 1-100 and 141-190; these read MTIL…MACV and GGGT…QSED. Residues 17-32 show a composition bias toward basic and acidic residues; that stretch reads DHPDDPDRRTGSDPHQ. Residues 141–163 are compositionally biased toward gly residues; that stretch reads GGGTGPGAAGGGGGGGGGGGVGG. The OTU domain occupies 211–334; sequence FVIKKMKEDG…NIHYNSVVNP (124 aa). The interval 216–222 is cys-loop; the sequence is MKEDGAC. Residue aspartate 219 is part of the active site. Cysteine 222 functions as the Nucleophile in the catalytic mechanism. A variable-loop region spans residues 271-281; sequence KRKNNCHGNHI. Residues 322-327 form a his-loop region; it reads YHRNIH. Histidine 327 is a catalytic residue. Positions 411–496 are disordered; it reads ARQPRKASAT…ACVGPDRPTS (86 aa). Low complexity-rich tracts occupy residues 417-430 and 437-448; these read ASATCSSATAAASS and ARSPRQRSSAPS.

Belongs to the peptidase C85 family.

It catalyses the reaction Thiol-dependent hydrolysis of ester, thioester, amide, peptide and isopeptide bonds formed by the C-terminal Gly of ubiquitin (a 76-residue protein attached to proteins as an intracellular targeting signal).. Deubiquitinating enzyme that may function as negative regulator of the innate immune system. Has peptidase activity towards 'Lys-48'- and 'Lys-63'-linked polyubiquitin chains. Can also cleave 'Lys-11'-linked ubiquitin chains (in vitro). The protein is OTU domain-containing protein 5-A (otud5a) of Danio rerio (Zebrafish).